A 108-amino-acid polypeptide reads, in one-letter code: Large ribosomal subunit protein uL24 (108 aa).

Belongs to the universal ribosomal protein uL24 family. In terms of assembly, part of the 50S ribosomal subunit.

In terms of biological role, one of two assembly initiator proteins, it binds directly to the 5'-end of the 23S rRNA, where it nucleates assembly of the 50S subunit. Functionally, one of the proteins that surrounds the polypeptide exit tunnel on the outside of the subunit. In Desulfosudis oleivorans (strain DSM 6200 / JCM 39069 / Hxd3) (Desulfococcus oleovorans), this protein is Large ribosomal subunit protein uL24.